Reading from the N-terminus, the 700-residue chain is Elongation factor G (700 aa).

A tr-type G domain is found at 8–290 (DRYRNVGIMA…AMIMYMPSPL (283 aa)). GTP contacts are provided by residues 17 to 24 (AHIDAGKT), 88 to 92 (DTPGH), and 142 to 145 (NKMD).

It belongs to the TRAFAC class translation factor GTPase superfamily. Classic translation factor GTPase family. EF-G/EF-2 subfamily.

The protein localises to the cytoplasm. Functionally, catalyzes the GTP-dependent ribosomal translocation step during translation elongation. During this step, the ribosome changes from the pre-translocational (PRE) to the post-translocational (POST) state as the newly formed A-site-bound peptidyl-tRNA and P-site-bound deacylated tRNA move to the P and E sites, respectively. Catalyzes the coordinated movement of the two tRNA molecules, the mRNA and conformational changes in the ribosome. The chain is Elongation factor G from Vesicomyosocius okutanii subsp. Calyptogena okutanii (strain HA).